A 519-amino-acid chain; its full sequence is Cytochrome P450 52E1 (519 aa).

2 consecutive transmembrane segments (helical) span residues 10–30 (ALGG…FYFI) and 44–64 (VIVF…TAML). C479 contacts heme.

It belongs to the cytochrome P450 family. The cofactor is heme.

The protein localises to the membrane. Together with an NADPH cytochrome P450 the enzyme system catalyzes the terminal hydroxylation as the first step in the assimilation of alkanes and fatty acids. This Candida apicola (Yeast) protein is Cytochrome P450 52E1 (CYP52E1).